The primary structure comprises 45 residues: Photosystem II reaction center protein K (45 aa).

Residues 1-8 constitute a propeptide that is removed on maturation; sequence MEAALLLA. The helical transmembrane segment at 24-44 threads the bilayer; it reads LPIIPVFFLLLAFVWQAAVGF.

It belongs to the PsbK family. In terms of assembly, PSII is composed of 1 copy each of membrane proteins PsbA, PsbB, PsbC, PsbD, PsbE, PsbF, PsbH, PsbI, PsbJ, PsbK, PsbL, PsbM, PsbT, PsbX, PsbY, PsbZ, Psb30/Ycf12, peripheral proteins PsbO, CyanoQ (PsbQ), PsbU, PsbV and a large number of cofactors. It forms dimeric complexes.

The protein localises to the cellular thylakoid membrane. One of the components of the core complex of photosystem II (PSII). PSII is a light-driven water:plastoquinone oxidoreductase that uses light energy to abstract electrons from H(2)O, generating O(2) and a proton gradient subsequently used for ATP formation. It consists of a core antenna complex that captures photons, and an electron transfer chain that converts photonic excitation into a charge separation. The polypeptide is Photosystem II reaction center protein K (Nostoc sp. (strain PCC 7120 / SAG 25.82 / UTEX 2576)).